The chain runs to 239 residues: Putative 3-methyladenine DNA glycosylase (239 aa).

This sequence belongs to the DNA glycosylase MPG family.

The sequence is that of Putative 3-methyladenine DNA glycosylase from Pseudomonas aeruginosa (strain ATCC 15692 / DSM 22644 / CIP 104116 / JCM 14847 / LMG 12228 / 1C / PRS 101 / PAO1).